Consider the following 293-residue polypeptide: Acetylglutamate kinase (293 aa).

Residues 65 to 66 (GG), Arg-87, and Asn-188 each bind substrate.

Belongs to the acetylglutamate kinase family. ArgB subfamily.

The protein localises to the cytoplasm. It carries out the reaction N-acetyl-L-glutamate + ATP = N-acetyl-L-glutamyl 5-phosphate + ADP. It functions in the pathway amino-acid biosynthesis; L-arginine biosynthesis; N(2)-acetyl-L-ornithine from L-glutamate: step 2/4. Catalyzes the ATP-dependent phosphorylation of N-acetyl-L-glutamate. This Symbiobacterium thermophilum (strain DSM 24528 / JCM 14929 / IAM 14863 / T) protein is Acetylglutamate kinase.